A 121-amino-acid chain; its full sequence is Tachykinin-3 (121 aa).

The N-terminal stretch at 1–16 is a signal peptide; sequence MRIMLLFTAILAFSLA. A propeptide spanning residues 17 to 78 is cleaved from the precursor; it reads QSFGAVCKEP…TDPKESTSPE (62 aa). M90 is subject to Methionine amide. A disordered region spans residues 93–121; sequence RSVQPDSPTDVNQENVPSFGILKYPPRAE. Residues 94 to 121 constitute a propeptide that is removed on maturation; the sequence is SVQPDSPTDVNQENVPSFGILKYPPRAE. A compositionally biased stretch (polar residues) spans 96–108; the sequence is QPDSPTDVNQENV.

The protein belongs to the tachykinin family.

Its subcellular location is the secreted. In terms of biological role, tachykinins are active peptides which excite neurons, evoke behavioral responses, are potent vasodilators and secretagogues, and contract (directly or indirectly) many smooth muscles. Is a critical central regulator of gonadal function. In Homo sapiens (Human), this protein is Tachykinin-3 (TAC3).